The primary structure comprises 141 residues: Large ribosomal subunit protein uL11A (141 aa).

Belongs to the universal ribosomal protein uL11 family. In terms of assembly, part of the ribosomal stalk of the 50S ribosomal subunit. Interacts with L10 and the large rRNA to form the base of the stalk. L10 forms an elongated spine to which L12 dimers bind in a sequential fashion forming a multimeric L10(L12)X complex. One or more lysine residues are methylated.

Its function is as follows. Forms part of the ribosomal stalk which helps the ribosome interact with GTP-bound translation factors. The polypeptide is Large ribosomal subunit protein uL11A (Bacillus cereus (strain ATCC 14579 / DSM 31 / CCUG 7414 / JCM 2152 / NBRC 15305 / NCIMB 9373 / NCTC 2599 / NRRL B-3711)).